We begin with the raw amino-acid sequence, 458 residues long: MEFIHQPYYPGETIAAIATPPGEGGVAIIRISGDQSLEVAAKIFSGPIFSYRSHTAHYGQIYNSSGEHVDDVLVLIMLGKRSYTGENTVEIHCHGGSLITRKVLEVVLAAGARAALPGEFTFKAYMNGKIDLAQAEAVQELICAKNEKALGAAESQLKGSLSNRVLAFQSTLTQIAAILEAWVDFPEEGLEFATMDELDQDLERTAKDMEKLVNSFHNGKILHDGLSICLIGCPNVGKSSLMNALLDKDRAIVSPIPGTTRDVLEDHLRLNGLHIKLSDTAGIREANESVEQEGIRRSKKAMQEADLILLVLDAHKGLEKEDQELLKQVPFHKTIVIWNKIDLNPRNLPCLEVPFLVHLSAKEKIGLEELHQTIDTIIWQDGPPSKEEILITNVRHKEALIESIESLRRVKIGLRHQVSPEFLTLDMRQSLLELGKIIGTNISEDILSAIFSKFCIGK.

3 residues coordinate (6S)-5-formyl-5,6,7,8-tetrahydrofolate: R30, E90, and K129. Residues 225 to 379 form the TrmE-type G domain; that stretch reads GLSICLIGCP…LHQTIDTIIW (155 aa). N235 contacts K(+). Residues 235-240, 254-260, and 279-282 contribute to the GTP site; these read NVGKSS, SPIPGTT, and DTAG. Position 239 (S239) interacts with Mg(2+). The K(+) site is built by S254, I256, and T259. T260 lines the Mg(2+) pocket. K458 contacts (6S)-5-formyl-5,6,7,8-tetrahydrofolate.

It belongs to the TRAFAC class TrmE-Era-EngA-EngB-Septin-like GTPase superfamily. TrmE GTPase family. As to quaternary structure, homodimer. Heterotetramer of two MnmE and two MnmG subunits. It depends on K(+) as a cofactor.

It localises to the cytoplasm. In terms of biological role, exhibits a very high intrinsic GTPase hydrolysis rate. Involved in the addition of a carboxymethylaminomethyl (cmnm) group at the wobble position (U34) of certain tRNAs, forming tRNA-cmnm(5)s(2)U34. In Protochlamydia amoebophila (strain UWE25), this protein is tRNA modification GTPase MnmE.